Reading from the N-terminus, the 337-residue chain is Pantothenate synthetase (337 aa).

31–38 (MGALHEGH) contributes to the ATP binding site. Catalysis depends on histidine 38, which acts as the Proton donor. (R)-pantoate is bound at residue glutamine 65. Beta-alanine is bound at residue glutamine 65. 152-155 (GQKD) contributes to the ATP binding site. Glutamine 158 contributes to the (R)-pantoate binding site. Residues valine 181 and 189–192 (LSSR) contribute to the ATP site.

Belongs to the pantothenate synthetase family. Homodimer.

It localises to the cytoplasm. It carries out the reaction (R)-pantoate + beta-alanine + ATP = (R)-pantothenate + AMP + diphosphate + H(+). It functions in the pathway cofactor biosynthesis; (R)-pantothenate biosynthesis; (R)-pantothenate from (R)-pantoate and beta-alanine: step 1/1. Functionally, catalyzes the condensation of pantoate with beta-alanine in an ATP-dependent reaction via a pantoyl-adenylate intermediate. The protein is Pantothenate synthetase of Streptomyces coelicolor (strain ATCC BAA-471 / A3(2) / M145).